Reading from the N-terminus, the 406-residue chain is MNETPKPNSFRSGPDEDGRFGIYGGRFVAETLMPLILDLQDEWNRAKNDPAFQAELKHLGAHYIGRPSPLYFAERLTAELGGAKIYFKREELNHTGSHKINNCIGQILLAKRMGKTRIIAETGAGQHGVASATVAARFGLPCVVYMGATDVERQAPNVFRMKLLGAEVKPVTAGSGTLKDAMNEALRDWVTNVEDTYYLIGTAAGPHPYPEMVRDFQSVIGIEAKEQMLAAEGRLPDLVIAAVGGGSNAIGIFHPFLDDPSVKIVGVEAGGKGLQGDEHCASITAGSPGVLHGNRTYLLQDSDGQIKEGHSISAGLDYPGIGPEHSWLNDTGRVDYVPIMDHEALEAFQTLTRLEGIIPALEPSHAIAEVIKRAPTMGKDEIILMNLSGRGDKDIFTVGKILGMGL.

N6-(pyridoxal phosphate)lysine is present on lysine 99.

This sequence belongs to the TrpB family. In terms of assembly, tetramer of two alpha and two beta chains. Requires pyridoxal 5'-phosphate as cofactor.

It carries out the reaction (1S,2R)-1-C-(indol-3-yl)glycerol 3-phosphate + L-serine = D-glyceraldehyde 3-phosphate + L-tryptophan + H2O. The protein operates within amino-acid biosynthesis; L-tryptophan biosynthesis; L-tryptophan from chorismate: step 5/5. In terms of biological role, the beta subunit is responsible for the synthesis of L-tryptophan from indole and L-serine. This Rhizobium johnstonii (strain DSM 114642 / LMG 32736 / 3841) (Rhizobium leguminosarum bv. viciae) protein is Tryptophan synthase beta chain.